The chain runs to 236 residues: Small ribosomal subunit protein uS2c (236 aa).

This sequence belongs to the universal ribosomal protein uS2 family.

It localises to the plastid. The protein localises to the chloroplast. This Lepidium virginicum (Virginia pepperweed) protein is Small ribosomal subunit protein uS2c (rps2).